Consider the following 168-residue polypeptide: Photosystem I assembly protein Ycf3 (168 aa).

TPR repeat units follow at residues 35–68 (AFTY…EIDP), 72–105 (SYIL…NPFL), and 120–153 (GEQA…TPGN).

Belongs to the Ycf3 family.

The protein resides in the plastid. It localises to the chloroplast thylakoid membrane. Functionally, essential for the assembly of the photosystem I (PSI) complex. May act as a chaperone-like factor to guide the assembly of the PSI subunits. This chain is Photosystem I assembly protein Ycf3, found in Populus alba (White poplar).